A 71-amino-acid chain; its full sequence is Small ribosomal subunit protein bS21 (71 aa).

The interval 43–71 (TERKRAKASAVKRHAKKLARENARRTRLY) is disordered. Basic residues predominate over residues 46 to 59 (KRAKASAVKRHAKK). The span at 60-71 (LARENARRTRLY) shows a compositional bias: basic and acidic residues.

This sequence belongs to the bacterial ribosomal protein bS21 family.

The protein is Small ribosomal subunit protein bS21 of Pectobacterium atrosepticum (strain SCRI 1043 / ATCC BAA-672) (Erwinia carotovora subsp. atroseptica).